Reading from the N-terminus, the 960-residue chain is UvrABC system protein A (960 aa).

35-42 (GLSGSGKS) lines the ATP pocket. Residues 270–297 (CAHCNVSVPELQPRLFSFNAPFGACPSC) form a C4-type zinc finger. 2 consecutive ABC transporter domains span residues 327 to 605 (FKPE…QASL) and 625 to 953 (GNGN…WYIK). 657 to 664 (GVSGSGKS) contacts ATP. The C4-type zinc finger occupies 756–782 (CEHCKGDGVITIEMNFLPDVYITCDVC).

It belongs to the ABC transporter superfamily. UvrA family. As to quaternary structure, forms a heterotetramer with UvrB during the search for lesions.

The protein localises to the cytoplasm. Functionally, the UvrABC repair system catalyzes the recognition and processing of DNA lesions. UvrA is an ATPase and a DNA-binding protein. A damage recognition complex composed of 2 UvrA and 2 UvrB subunits scans DNA for abnormalities. When the presence of a lesion has been verified by UvrB, the UvrA molecules dissociate. The chain is UvrABC system protein A from Treponema pallidum (strain Nichols).